The chain runs to 317 residues: Melanocyte-stimulating hormone receptor (317 aa).

Residues 1-37 (MPVQGSQRRLLGSLNSTPTATPHLGLAANQTGAWCLE) lie on the Extracellular side of the membrane. N29 carries an N-linked (GlcNAc...) asparagine glycan. Residues 38–63 (VSIPDGLFLSLGLVSLVENVLVVTAI) traverse the membrane as a helical segment. Residues 64 to 72 (AKNRNLHSP) lie on the Cytoplasmic side of the membrane. Residues 73–93 (MYCFICCLALSDLLVSGSNML) traverse the membrane as a helical segment. The Extracellular portion of the chain corresponds to 94 to 118 (ETAVTLLLEAGALAARAAVVQQLDN). Residues 119 to 140 (VIDVITCSSMLSSLCFLGAIAV) traverse the membrane as a helical segment. Residues 141–163 (DRYISIFYALRYHSIVTLPRARR) are Cytoplasmic-facing. The chain crosses the membrane as a helical span at residues 164-183 (AVAAIWVASVLFSMLFIAYY). Residues 184 to 191 (DHAAVLLC) lie on the Extracellular side of the membrane. The helical transmembrane segment at 192-211 (LVVFFLAMLVLMAVLYVHML) threads the bilayer. At 212 to 240 (ARACQHAQGIARLHKRQRPAHQGFGLKGA) the chain is on the cytoplasmic side. Residues 241 to 266 (ATLTILLGIFFLCWGPFFLHLTLIVL) traverse the membrane as a helical segment. Residues 267 to 279 (CPQHPTCSCIFKN) lie on the Extracellular side of the membrane. The chain crosses the membrane as a helical span at residues 280–300 (FNLFLALIICNAIIDPLIYAF). The Cytoplasmic segment spans residues 301–317 (RSQELRRTLKEVLLCSW). A lipid anchor (S-palmitoyl cysteine) is attached at C315.

Belongs to the G-protein coupled receptor 1 family. As to quaternary structure, interacts with MGRN1, but does not undergo MGRN1-mediated ubiquitination; this interaction competes with GNAS-binding and thus inhibits agonist-induced cAMP production. Interacts with OPN3; the interaction results in a decrease in MC1R-mediated cAMP signaling and ultimately a decrease in melanin production in melanocytes.

It localises to the cell membrane. In terms of biological role, receptor for MSH (alpha, beta and gamma) and ACTH. The activity of this receptor is mediated by G proteins which activate adenylate cyclase. Mediates melanogenesis, the production of eumelanin (black/brown) and phaeomelanin (red/yellow), via regulation of cAMP signaling in melanocytes. The sequence is that of Melanocyte-stimulating hormone receptor (MC1R) from Allenopithecus nigroviridis (Allen's swamp monkey).